The primary structure comprises 142 residues: MPTPSMEDYIEQIYLLIDEKGYARVSDIAEALSVHPSSVTKMVQKLDKDEYLIYEKYRGLVLTAKGKKIGERLVYRHELLEQFMRIIGVDESKIYNDVEGIEHHLSWEAIDRIGDLVQYFEEDDFRIETLRAVQKANGEQSK.

Residues 1-63 (MPTPSMEDYI…YEKYRGLVLT (63 aa)) enclose the HTH dtxR-type domain. Residues Asp-8, Glu-11, His-77, Glu-99, Glu-102, and His-103 each contribute to the Mn(2+) site.

This sequence belongs to the DtxR/MntR family. As to quaternary structure, homodimer.

It localises to the cytoplasm. With respect to regulation, DNA binding is strongly activated by Mn(2+). Its function is as follows. Central regulator of manganese homeostasis. In Bacillus cytotoxicus (strain DSM 22905 / CIP 110041 / 391-98 / NVH 391-98), this protein is HTH-type transcriptional regulator MntR.